Consider the following 274-residue polypeptide: Bis(5'-nucleosyl)-tetraphosphatase, symmetrical (274 aa).

Belongs to the Ap4A hydrolase family.

It catalyses the reaction P(1),P(4)-bis(5'-adenosyl) tetraphosphate + H2O = 2 ADP + 2 H(+). Its function is as follows. Hydrolyzes diadenosine 5',5'''-P1,P4-tetraphosphate to yield ADP. This Erwinia tasmaniensis (strain DSM 17950 / CFBP 7177 / CIP 109463 / NCPPB 4357 / Et1/99) protein is Bis(5'-nucleosyl)-tetraphosphatase, symmetrical.